A 332-amino-acid polypeptide reads, in one-letter code: Iron-utilization periplasmic protein (332 aa).

The signal sequence occupies residues 1–23 (MQFKHFKLATLAAALAFSANSFA). The Fe cation site is built by His-32, Glu-80, Tyr-218, and Tyr-219.

It belongs to the bacterial solute-binding protein 1 family. As to quaternary structure, the complex is composed of two ATP-binding proteins (FbpC), two transmembrane proteins (FbpB) and a solute-binding protein (FbpA).

It localises to the periplasm. In terms of biological role, part of the ABC transporter complex FbpABC (TC 3.A.1.10.1) involved in Fe(3+) ions import. This protein specifically binds Fe(3+) and is involved in its transmembrane transport. The protein is Iron-utilization periplasmic protein (fbpA) of Haemophilus influenzae (strain ATCC 51907 / DSM 11121 / KW20 / Rd).